We begin with the raw amino-acid sequence, 188 residues long: MLVKTALFVTLIGLAQAGPLPAKSSGSEDTYDSHPQYSFNYDVQDPETGDVKSQSESRDGDVVHGQYSVNDADGYRRTVDYTADDVRGFNAVVRREPLSSAAVVVKPQATAVVPKVQLKPLKKLPALKPLSQASAVVHRSFAPVVHHAPVTHVVHHAAPAHSFVSHHVPVLKTTVHHAHHPHAISYVF.

Residues Met1–Ala17 form the signal peptide. The disordered stretch occupies residues Pro19–Tyr67. A compositionally biased stretch (polar residues) spans Ser24–Tyr41. The region spanning His34–Ser100 is the Chitin-binding type R&amp;R domain. Residues Gly49 to Val62 are compositionally biased toward basic and acidic residues.

Imaginal (anterior) epidermis.

Its function is as follows. Component of the cuticle of the pupa of fruit fly. This Drosophila melanogaster (Fruit fly) protein is Pupal cuticle protein Edg-84A (Edg84A).